We begin with the raw amino-acid sequence, 366 residues long: RISC-loading complex subunit TARBP2 (366 aa).

Sufficient for interaction with PRKRA stretches follow at residues 22–105 (MLAA…EPAL), 152–234 (SPQQ…DARD), and 287–366 (LGAL…AGSK). Residues 30–97 (TPISLLQEYG…AEVALKHLKG (68 aa)) enclose the DRBM 1 domain. Ser152 is modified (phosphoserine). DRBM domains are found at residues 159–227 (NPVG…RVHT) and 293–361 (ACCR…YLKI). The segment at 228-366 (VPLDARDGNE…QYLKIMAGSK (139 aa)) is sufficient for interaction with DICER1.

The protein belongs to the TARBP2 family. In terms of assembly, self-associates. Component of the RISC loading complex (RLC), or micro-RNA (miRNA) loading complex (miRLC), which is composed of DICER1, AGO2 and TARBP2. Note that the trimeric RLC/miRLC is also referred to as RISC. Interacts with EIF2AK2/PKR and inhibits its protein kinase activity. Interacts with DHX9 and PRKRA. Interacts with DICER1, AGO2, MOV10, EIF6 and RPL7A (60S ribosome subunit); they form a large RNA-induced silencing complex (RISC). Interacts with IRF7; this interaction prevents IRF7 phosphorylation and activation. (Microbial infection) Interacts with FTSJ3; forms a complex with FTSJ3 and HIV-1 TAR RNA. As to quaternary structure, (Microbial infection) Interacts with ebolavirus VP30; this interaction, which occurs only in the presence of siRNA, prevents TARBP2 binding to DICER1 and thus allows the virus to counteract host RNA silencing. In terms of assembly, (Microbial infection) Interacts with ebolavirus VP35; this interaction prevents TARBP2 binding to DICER1 and thus allows the virus to counteract host RNA silencing.

The protein localises to the cytoplasm. It is found in the perinuclear region. The protein resides in the nucleus. Functionally, required for formation of the RNA induced silencing complex (RISC). Component of the RISC loading complex (RLC), also known as the micro-RNA (miRNA) loading complex (miRLC), which is composed of DICER1, AGO2 and TARBP2. Within the RLC/miRLC, DICER1 and TARBP2 are required to process precursor miRNAs (pre-miRNAs) to mature miRNAs and then load them onto AGO2. AGO2 bound to the mature miRNA constitutes the minimal RISC and may subsequently dissociate from DICER1 and TARBP2. May also play a role in the production of short interfering RNAs (siRNAs) from double-stranded RNA (dsRNA) by DICER1. Binds in vitro to the PRM1 3'-UTR. Seems to act as a repressor of translation. For some pre-miRNA substrates, may also alter the choice of cleavage site by DICER1. Negatively regulates IRF7-mediated IFN-beta signaling triggered by viral infection by inhibiting the phosphorylation of IRF7 and promoting its 'Lys'-48-linked ubiquitination and degradation. Its function is as follows. (Microbial infection) Binds to the HIV-1 TAR RNA which is located in the long terminal repeat (LTR) of HIV-1, and stimulates translation of TAR-containing RNAs. This is achieved in part at least by binding to and inhibiting EIF2AK2/PKR, thereby reducing phosphorylation and inhibition of EIF2S1/eIF-2-alpha. May also promote translation of TAR-containing RNAs independently of EIF2AK2/PKR. Mediates recruitment of FTSJ3 methyltransferase to HIV-1 RNA, leading to 2'-O-methylation of the viral genome, allowing HIV-1 to escape the innate immune system. This is RISC-loading complex subunit TARBP2 from Homo sapiens (Human).